The sequence spans 225 residues: uncharacterized protein (225 aa).

This is an uncharacterized protein from Ureaplasma parvum serovar 3 (strain ATCC 700970).